A 428-amino-acid chain; its full sequence is Enolase (428 aa).

Gln163 is a (2R)-2-phosphoglycerate binding site. Glu205 acts as the Proton donor in catalysis. Mg(2+)-binding residues include Asp242, Glu285, and Asp312. 4 residues coordinate (2R)-2-phosphoglycerate: Lys337, Arg366, Ser367, and Lys388. Lys337 serves as the catalytic Proton acceptor.

It belongs to the enolase family. Mg(2+) serves as cofactor.

The protein localises to the cytoplasm. Its subcellular location is the secreted. It localises to the cell surface. It catalyses the reaction (2R)-2-phosphoglycerate = phosphoenolpyruvate + H2O. Its pathway is carbohydrate degradation; glycolysis; pyruvate from D-glyceraldehyde 3-phosphate: step 4/5. Its function is as follows. Catalyzes the reversible conversion of 2-phosphoglycerate (2-PG) into phosphoenolpyruvate (PEP). It is essential for the degradation of carbohydrates via glycolysis. The polypeptide is Enolase (Neisseria meningitidis serogroup A / serotype 4A (strain DSM 15465 / Z2491)).